The primary structure comprises 316 residues: tRNA dimethylallyltransferase (316 aa).

Residue 17 to 24 participates in ATP binding; that stretch reads GPTASGKT. 19–24 serves as a coordination point for substrate; sequence TASGKT. 3 interaction with substrate tRNA regions span residues 42-45, 166-170, and 247-252; these read DSAL, QRLSR, and RCVGYR.

The protein belongs to the IPP transferase family. As to quaternary structure, monomer. The cofactor is Mg(2+).

It carries out the reaction adenosine(37) in tRNA + dimethylallyl diphosphate = N(6)-dimethylallyladenosine(37) in tRNA + diphosphate. In terms of biological role, catalyzes the transfer of a dimethylallyl group onto the adenine at position 37 in tRNAs that read codons beginning with uridine, leading to the formation of N6-(dimethylallyl)adenosine (i(6)A). The polypeptide is tRNA dimethylallyltransferase (Salmonella arizonae (strain ATCC BAA-731 / CDC346-86 / RSK2980)).